A 603-amino-acid chain; its full sequence is Serine/threonine-protein kinase PLK1 (603 aa).

Residues 1–15 (MNAAAKAGKLARAPA) are compositionally biased toward low complexity. Residues 1-32 (MNAAAKAGKLARAPADLGKGGVPGDAAPGAPG) form a disordered region. A Glycyl lysine isopeptide (Lys-Gly) (interchain with G-Cter in ubiquitin) cross-link involves residue K19. Residues 53–305 (YVRGRFLGKG…IHELLNDEFF (253 aa)) form the Protein kinase domain. Residues 59 to 67 (LGKGGFAKC) and K82 each bind ATP. A Phosphoserine modification is found at S103. E131 is a binding site for ATP. S137 is subject to Phosphoserine. D176 serves as the catalytic Proton acceptor. ATP contacts are provided by residues 178 to 181 (KLGN) and D194. The segment at 194-221 (DFGLATKVEYEGERKKTLCGTPNYIAPE) is activation loop. T210 carries the post-translational modification Phosphothreonine; by AURKA. T214 carries the phosphothreonine modification. A phosphoserine; by autocatalysis mark is found at S269 and S335. The D-box that targets the protein for proteasomal degradation in anaphase signature appears at 337 to 340 (RKPL). K338 is covalently cross-linked (Glycyl lysine isopeptide (Lys-Gly) (interchain with G-Cter in SUMO2)). Positions 338–361 (KPLTVLNKGVENPLPDRPREKEEP) are disordered. The span at 351–361 (LPDRPREKEEP) shows a compositional bias: basic and acidic residues. Phosphoserine occurs at positions 375 and 450. The 79-residue stretch at 410-488 (WVSKWVDYSD…LNYFRNYMSE (79 aa)) folds into the POLO box 1 domain. K492 participates in a covalent cross-link: Glycyl lysine isopeptide (Lys-Gly) (interchain with G-Cter in ubiquitin). The interval 493–507 (AGANITPREGDELAR) is linker. Position 498 is a phosphothreonine (T498). The region spanning 510-592 (YLRTWFRTRS…ARTMVDKLLS (83 aa)) is the POLO box 2 domain. Residues 538–540 (HTK) are important for interaction with phosphorylated proteins.

This sequence belongs to the protein kinase superfamily. Ser/Thr protein kinase family. CDC5/Polo subfamily. In terms of assembly, interacts with CEP170 and EVI5. Interacts and phosphorylates ERCC6L. Interacts with FAM29A. Interacts with SLX4/BTBD12 and TTDN1. Interacts with BUB1B. Interacts (via POLO-box domain) with the phosphorylated form of BUB1, CENPU and CDC25C. Interacts with isoform 3 of SGO1. Interacts with BORA, KIF2A and AURKA. Interacts with TOPORS and CYLD. Interacts with ECT2; the interaction is stimulated upon phosphorylation of ECT2 on 'Thr-444'. Interacts with PRC1. Interacts with KIF20A/MKLP2 (when phosphorylated), leading to the recruitment at the central spindle. Interacts (via POLO box domains) with PPP1R12A/MYPT1 (when previously phosphorylated by CDK1). Part of an astrin (SPAG5)-kinastrin (SKAP) complex containing KNSTRN, SPAG5, PLK1, DYNLL1 and SGO2. Interacts with BIRC6/bruce. Interacts with CDK1-phosphorylated FRY; this interaction occurs in mitotic cells, but not in interphase cells. FRY interaction facilitates AURKA-mediated PLK1 phosphorylation. Interacts with CDK1-phosphorylated DCTN6 during mitotic prometaphase; the interaction facilitates recruitment to kinetochores. Interacts with CEP68; the interaction phosphorylates CEP68. Interacts (via POLO-box domain) with DCTN1. Interacts with CEP20 in later G1, S, G2 and M phases of the cell cycle; this interaction recruits PLK1 to centrosomes, a step required for S phase progression. Interacts with HSF1; this interaction increases upon heat shock but does not modulate neither HSF1 homotrimerization nor DNA-binding activities. Interacts with HNRNPU; this interaction induces phosphorylation of HNRNPU in mitosis. Interacts (via its N-terminus) with RIOK2. Interacts with KLHL22. Interacts (via POLO box domains) with NEDD9/HEF1 (via C-terminus). Interacts (via RVxF motif) with FIRRM; regulates PLK1 kinase activity. Interacts with SKA3; the interaction promotes the stability of PLK1. Interacts with the MTMR3:MTMR4 heterooligomer; brings CEP55 and PLK1 together during early mitosis, regulating the phosphorylation of CEP55 by PLK1 and its recruitment to the midbody where it can mediate cell abscission. Post-translationally, catalytic activity is enhanced by phosphorylation of Thr-210. Phosphorylation at Thr-210 is first detected on centrosomes in the G2 phase of the cell cycle, peaks in prometaphase and gradually disappears from centrosomes during anaphase. Dephosphorylation at Thr-210 at centrosomes is probably mediated by protein phosphatase 1C (PP1C), via interaction with PPP1R12A/MYPT1. Autophosphorylation and phosphorylation of Ser-137 may not be significant for the activation of PLK1 during mitosis, but may enhance catalytic activity during recovery after DNA damage checkpoint. Phosphorylated in vitro by STK10. Ubiquitinated by the anaphase promoting complex/cyclosome (APC/C) in anaphase and following DNA damage, leading to its degradation by the proteasome. Ubiquitination is mediated via its interaction with FZR1/CDH1. Ubiquitination and subsequent degradation prevents entry into mitosis and is essential to maintain an efficient G2 DNA damage checkpoint. Monoubiquitination at Lys-492 by the BCR(KLHL22) ubiquitin ligase complex does not lead to degradation: it promotes PLK1 dissociation from phosphoreceptor proteins and subsequent removal from kinetochores, allowing silencing of the spindle assembly checkpoint (SAC) and chromosome segregation.

The protein resides in the nucleus. The protein localises to the chromosome. It localises to the centromere. It is found in the kinetochore. Its subcellular location is the cytoplasm. The protein resides in the cytoskeleton. The protein localises to the microtubule organizing center. It localises to the centrosome. It is found in the spindle. Its subcellular location is the midbody. It catalyses the reaction L-seryl-[protein] + ATP = O-phospho-L-seryl-[protein] + ADP + H(+). The enzyme catalyses L-threonyl-[protein] + ATP = O-phospho-L-threonyl-[protein] + ADP + H(+). Its activity is regulated as follows. Activated by phosphorylation of Thr-210 by AURKA; phosphorylation by AURKA is enhanced by BORA. Once activated, activity is stimulated by binding target proteins. Binding of target proteins has no effect on the non-activated kinase. Several inhibitors targeting PLKs are currently in development and are under investigation in a growing number of clinical trials, such as BI 2536, an ATP-competitive PLK1 inhibitor or BI 6727, a dihydropteridinone that specifically inhibits the catalytic activity of PLK1. Functionally, serine/threonine-protein kinase that performs several important functions throughout M phase of the cell cycle, including the regulation of centrosome maturation and spindle assembly, the removal of cohesins from chromosome arms, the inactivation of anaphase-promoting complex/cyclosome (APC/C) inhibitors, and the regulation of mitotic exit and cytokinesis. Polo-like kinase proteins act by binding and phosphorylating proteins that are already phosphorylated on a specific motif recognized by the POLO box domains. Phosphorylates BORA, BUB1B/BUBR1, CCNB1, CDC25C, CEP55, ECT2, ERCC6L, FBXO5/EMI1, FOXM1, KIF20A/MKLP2, CENPU, NEDD1, NINL, NPM1, NUDC, PKMYT1/MYT1, KIZ, PPP1R12A/MYPT1, PRC1, RACGAP1/CYK4, RHNO1, SGO1, STAG2/SA2, TEX14, TOPORS, p73/TP73, TPT1, WEE1 and HNRNPU. Plays a key role in centrosome functions and the assembly of bipolar spindles by phosphorylating KIZ, NEDD1 and NINL. NEDD1 phosphorylation promotes subsequent targeting of the gamma-tubulin ring complex (gTuRC) to the centrosome, an important step for spindle formation. Phosphorylation of NINL component of the centrosome leads to NINL dissociation from other centrosomal proteins. Involved in mitosis exit and cytokinesis by phosphorylating CEP55, ECT2, KIF20A/MKLP2, CENPU, PRC1 and RACGAP1. Recruited at the central spindle by phosphorylating and docking PRC1 and KIF20A/MKLP2; creates its own docking sites on PRC1 and KIF20A/MKLP2 by mediating phosphorylation of sites subsequently recognized by the POLO box domains. Phosphorylates RACGAP1, thereby creating a docking site for the Rho GTP exchange factor ECT2 that is essential for the cleavage furrow formation. Promotes the central spindle recruitment of ECT2. Plays a central role in G2/M transition of mitotic cell cycle by phosphorylating CCNB1, CDC25C, FOXM1, CENPU, PKMYT1/MYT1, PPP1R12A/MYPT1 and WEE1. Part of a regulatory circuit that promotes the activation of CDK1 by phosphorylating the positive regulator CDC25C and inhibiting the negative regulators WEE1 and PKMYT1/MYT1. Also acts by mediating phosphorylation of cyclin-B1 (CCNB1) on centrosomes in prophase. Phosphorylates FOXM1, a key mitotic transcription regulator, leading to enhance FOXM1 transcriptional activity. Involved in kinetochore functions and sister chromatid cohesion by phosphorylating BUB1B/BUBR1, FBXO5/EMI1 and STAG2/SA2. PLK1 is high on non-attached kinetochores suggesting a role of PLK1 in kinetochore attachment or in spindle assembly checkpoint (SAC) regulation. Required for kinetochore localization of BUB1B. Regulates the dissociation of cohesin from chromosomes by phosphorylating cohesin subunits such as STAG2/SA2. Phosphorylates SGO1: required for spindle pole localization of isoform 3 of SGO1 and plays a role in regulating its centriole cohesion function. Mediates phosphorylation of FBXO5/EMI1, a negative regulator of the APC/C complex during prophase, leading to FBXO5/EMI1 ubiquitination and degradation by the proteasome. Acts as a negative regulator of p53 family members: phosphorylates TOPORS, leading to inhibit the sumoylation of p53/TP53 and simultaneously enhance the ubiquitination and subsequent degradation of p53/TP53. Phosphorylates the transactivation domain of the transcription factor p73/TP73, leading to inhibit p73/TP73-mediated transcriptional activation and pro-apoptotic functions. Phosphorylates BORA, and thereby promotes the degradation of BORA. Contributes to the regulation of AURKA function. Also required for recovery after DNA damage checkpoint and entry into mitosis. Phosphorylates MISP, leading to stabilization of cortical and astral microtubule attachments required for proper spindle positioning. Together with MEIKIN, acts as a regulator of kinetochore function during meiosis I: required both for mono-orientation of kinetochores on sister chromosomes and protection of centromeric cohesin from separase-mediated cleavage. Phosphorylates CEP68 and is required for its degradation. Regulates nuclear envelope breakdown during prophase by phosphorylating DCTN1 resulting in its localization in the nuclear envelope. Phosphorylates the heat shock transcription factor HSF1, promoting HSF1 nuclear translocation upon heat shock. Phosphorylates HSF1 also in the early mitotic period; this phosphorylation regulates HSF1 localization to the spindle pole, the recruitment of the SCF(BTRC) ubiquitin ligase complex induicing HSF1 degradation, and hence mitotic progression. Regulates mitotic progression by phosphorylating RIOK2. Through the phosphorylation of DZIP1 regulates the localization during mitosis of the BBSome, a ciliary protein complex involved in cilium biogenesis. Regulates DNA repair during mitosis by mediating phosphorylation of POLQ and RHNO1, thereby promoting POLQ recruitment to DNA damage sites. Phosphorylates ATXN10 which may play a role in the regulation of cytokinesis and may stimulate the proteasome-mediated degradation of ATXN10. The protein is Serine/threonine-protein kinase PLK1 (Plk1) of Rattus norvegicus (Rat).